The sequence spans 132 residues: Ribonuclease P protein component (132 aa).

This sequence belongs to the RnpA family. In terms of assembly, consists of a catalytic RNA component (M1 or rnpB) and a protein subunit.

The enzyme catalyses Endonucleolytic cleavage of RNA, removing 5'-extranucleotides from tRNA precursor.. RNaseP catalyzes the removal of the 5'-leader sequence from pre-tRNA to produce the mature 5'-terminus. It can also cleave other RNA substrates such as 4.5S RNA. The protein component plays an auxiliary but essential role in vivo by binding to the 5'-leader sequence and broadening the substrate specificity of the ribozyme. The chain is Ribonuclease P protein component from Marinobacter nauticus (strain ATCC 700491 / DSM 11845 / VT8) (Marinobacter aquaeolei).